The sequence spans 202 residues: Probable GTP-binding protein EngB (202 aa).

The EngB-type G domain maps to 30–201 (NILQIALAGR…WERIQYTIDS (172 aa)). Residues 38–45 (GRSNVGKS), 65–69 (GKTRS), 84–87 (DLPG), 151–154 (TKID), and 180–182 (VSS) each bind GTP. Ser-45 and Thr-67 together coordinate Mg(2+).

Belongs to the TRAFAC class TrmE-Era-EngA-EngB-Septin-like GTPase superfamily. EngB GTPase family. Mg(2+) serves as cofactor.

Necessary for normal cell division and for the maintenance of normal septation. The sequence is that of Probable GTP-binding protein EngB from Lawsonia intracellularis (strain PHE/MN1-00).